We begin with the raw amino-acid sequence, 439 residues long: Branched-chain amino acid permease BrnQ (439 aa).

Over 1–9 (MTHQLRSRD) the chain is Cytoplasmic. A helical transmembrane segment spans residues 10–30 (IIALGFMTFALFVGAGNIIFP). Residues 31 to 45 (PMVGLQAGEHVWTAA) are Periplasmic-facing. Residues 46–66 (FGFLITAVGLPVLTVVALAKV) traverse the membrane as a helical segment. Topologically, residues 67 to 79 (GGGVDSLSTPIGK) are cytoplasmic. A helical membrane pass occupies residues 80–100 (VAGVLLATVCYLAVGPLFATP). The Periplasmic segment spans residues 101–118 (RTATVSFEVGIAPLTGDS). Residues 119–139 (ALPLFIYSLVYFAIVILVSLY) traverse the membrane as a helical segment. The Cytoplasmic segment spans residues 140-149 (PGKLLDTVGN). The chain crosses the membrane as a helical span at residues 150–170 (FLAPLKIIALVILSVAAIVWP). At 171–189 (AGSISTATEAYQNAAFSNG) the chain is on the periplasmic side. A helical transmembrane segment spans residues 190–210 (FVNGYLTMDTLGAMVFGIVIV). Topologically, residues 211-226 (NAARSRGVTEARLLTR) are cytoplasmic. Residues 227–247 (YTVWAGLMAGVGLTLLYLALF) traverse the membrane as a helical segment. At 248-277 (RLGSDSASLVDQSANGAAILHAYVQHTFGG) the chain is on the periplasmic side. Residues 278-298 (GGSFLLAALIFIACLVTAVGL) form a helical membrane-spanning segment. At 299-316 (TCACAEFFAQYVPLSYRT) the chain is on the cytoplasmic side. Residues 317-337 (LVFILGGFSMVVSNLGLSQLI) form a helical membrane-spanning segment. Residue Gln-338 is a topological domain, periplasmic. The chain crosses the membrane as a helical span at residues 339 to 359 (ISVPVLTAIYPPCIALVVLSF). At 360-369 (TRSWWHNSSR) the chain is on the cytoplasmic side. A helical transmembrane segment spans residues 370-390 (VIAPPMFISLLFGILDGIKAS). The Periplasmic segment spans residues 391–404 (AFSDILPSWAQRLP). A helical transmembrane segment spans residues 405 to 425 (LAEQGLAWLMPTVVMVVLAII). Over 426 to 439 (WDRAAGRQVTSSAH) the chain is Cytoplasmic.

This sequence belongs to the branched chain amino acid transporter family.

The protein localises to the cell inner membrane. Its function is as follows. Liv-II branched chain amino acid transport system, which transports leucine, valine and isoleucine. This is Branched-chain amino acid permease BrnQ (brnQ) from Escherichia coli O157:H7.